We begin with the raw amino-acid sequence, 139 residues long: Putative nickel-responsive regulator (139 aa).

Ni(2+) contacts are provided by histidine 79, histidine 90, histidine 92, and cysteine 98.

This sequence belongs to the transcriptional regulatory CopG/NikR family. Ni(2+) is required as a cofactor.

Transcriptional regulator. The sequence is that of Putative nickel-responsive regulator from Lawsonia intracellularis (strain PHE/MN1-00).